The following is a 260-amino-acid chain: Proansamycin X synthase (260 aa).

Cys73 functions as the Acyl-thioester intermediate in the catalytic mechanism. Active-site residues include His111 and Asp126.

The protein belongs to the arylamine N-acetyltransferase family.

Its pathway is antibiotic biosynthesis; rifamycin B biosynthesis. Its function is as follows. Catalyzes the release of the completed linear polyketide from the rif PKS by forming an intramolecular amide bond, in this way terminating polyketide assembly and forming the macrocyclic compound proansamycin X, an intermediate in the rifamycin B biosynthesis. The sequence is that of Proansamycin X synthase (rifF) from Amycolatopsis mediterranei (strain S699) (Nocardia mediterranei).